The sequence spans 303 residues: Probable 5-dehydro-4-deoxyglucarate dehydratase (303 aa).

This sequence belongs to the DapA family.

It catalyses the reaction 5-dehydro-4-deoxy-D-glucarate + H(+) = 2,5-dioxopentanoate + CO2 + H2O. The protein operates within carbohydrate acid metabolism; D-glucarate degradation; 2,5-dioxopentanoate from D-glucarate: step 2/2. The chain is Probable 5-dehydro-4-deoxyglucarate dehydratase from Azotobacter vinelandii (strain DJ / ATCC BAA-1303).